Reading from the N-terminus, the 135-residue chain is Sex-regulated protein janus-A (135 aa).

Lys37 is a binding site for substrate. His63 functions as the Proton acceptor in the catalytic mechanism. A substrate-binding site is contributed by 104–106 (SQG).

It belongs to the janus family.

In terms of biological role, janA and janB regulate somatic sex differentiation. The sequence is that of Sex-regulated protein janus-A (janA) from Drosophila yakuba (Fruit fly).